A 792-amino-acid polypeptide reads, in one-letter code: Ubiquitin carboxyl-terminal hydrolase 10 (792 aa).

Positions 2–27 are DHR2-binding module; the sequence is TTQESIKPLVDRILSNPLQFNAAMIS. Disordered stretches follow at residues 64 to 87 and 103 to 320; these read AESKQIKENNLIDRPNGKKTNTVP and KDAA…SITP. Over residues 107 to 129 the composition is skewed to low complexity; that stretch reads DATGAKKSAELSTELSTEPPSSS. The tract at residues 109-145 is SIR4-binding module; sequence TGAKKSAELSTELSTEPPSSSSEDDKVGKEEEEEGEI. Residues 144–171 show a composition bias toward basic and acidic residues; that stretch reads EIFHEARDYVEPRKASLKERDNADKGDG. Positions 167-208 are UTP22-binding module; sequence DKGDGEDIGEDIGEDIGEDIGEDIGEDIGENLGSPLATIDDS. Residues 172–195 show a composition bias toward acidic residues; it reads EDIGEDIGEDIGEDIGEDIGEDIG. Positions 211–220 are enriched in basic and acidic residues; it reads ENEKEKRKEL. A compositionally biased stretch (acidic residues) spans 226-241; sequence SDDEIEDDEDEDDMDY. The segment covering 288–297 has biased composition (polar residues); that stretch reads VNNTKENGNR. Residues 362 to 733 enclose the USP domain; the sequence is RGLLNHGVTC…NAYYLLYTRL (372 aa). The Nucleophile role is filled by cysteine 371. Residues 526–563 are disordered; the sequence is LDPNSDLSSDSINGTSATTSTTTSNAATKPSLSSSSSV. Residues 530–539 are compositionally biased toward polar residues; the sequence is SDLSSDSING. The segment covering 540-563 has biased composition (low complexity); sequence TSATTSTTTSNAATKPSLSSSSSV. Histidine 691 functions as the Proton acceptor in the catalytic mechanism. A compositionally biased stretch (polar residues) spans 749–766; that stretch reads TGNVTSKSKQEQAVNEPN. The disordered stretch occupies residues 749 to 792; the sequence is TGNVTSKSKQEQAVNEPNNRPLKINSKKNNRKKWKKNKKRKFTK. Residues 773-792 are compositionally biased toward basic residues; sequence NSKKNNRKKWKKNKKRKFTK.

This sequence belongs to the peptidase C19 family. Interacts with SIR4. Interacts with the proliferating-cell nuclear antigen PCNA/POL30. Interacts with DHR2 and UTP22.

It localises to the nucleus. Its subcellular location is the chromosome. The protein localises to the telomere. It is found in the nucleolus. The enzyme catalyses Thiol-dependent hydrolysis of ester, thioester, amide, peptide and isopeptide bonds formed by the C-terminal Gly of ubiquitin (a 76-residue protein attached to proteins as an intracellular targeting signal).. Deubiquitinating enzyme involved in telomere and HM loci silencing, which is the repression of chromatin structure which leads to a stop in the transcription of nearby genes. Targets histone H2B for deubiquitination, thus helping to localize SIR2 to the telomere. At silent chromatin, including telomeres and the rDNA locus, not only maintains low H2B 'Lys-123' ubiquitination (H2BK123Ub), but also low H3 'Lys-4' and 'Lys-79' methylation (H3K4me and H3K79me, respectively). Controls the proliferating-cell nuclear antigen PCNA/POL30 deubiquitination which is crucial for keeping TLS polymerases in check as well as for down-regulating the error-free bypass. Deubiquitinates and stabilizes RPA190, the largest subunit of RNA polymerase I, to achieve optimal levels of ribosomes and cell growth. Also protects nutrient transporters such as GAP1 from ubiquitin-dependent endocytosis. The sequence is that of Ubiquitin carboxyl-terminal hydrolase 10 (UBP10) from Saccharomyces cerevisiae (strain ATCC 204508 / S288c) (Baker's yeast).